Here is a 353-residue protein sequence, read N- to C-terminus: MTATLERRESASIWGRFCDWVTSTENRLYIGWFGVLMIPTLLTATSVFIIAFIAAPPVDIDGIREPVSGSLLYGNNIISGAIIPTSAAIGLHFYPIWEAASVDEWLYNGGPYELIVLHFLLGVACYMGREWELSYRLGMRPWIAVAYSAPVAAATAVFLIYPIGQGSFSDGMPLGISGTFNFMIVFQAEHNILMHPFHMLGVAGVFGGSLFSAMHGSLVTSSLIRETTENESANAGYKFGQEEETYNIVAAHGYFGRLIFQYASFNNSRSLHFFLAAWPVVGIWFTALGISTMAFNLNGFNFNQSVVDSQGRVINTWADIINRANLGMEVMHERNAHNFPLDLAAVEAPAVNG.

An N-acetylthreonine modification is found at Thr2. Thr2 is modified (phosphothreonine). 3 helical membrane-spanning segments follow: residues 29-46 (YIGW…TATS), 118-133 (HFLL…EWEL), and 142-156 (WIAV…AATA). Residue His118 coordinates chlorophyll a. Position 126 (Tyr126) interacts with pheophytin a. Residues Asp170 and Glu189 each coordinate [CaMn4O5] cluster. Residues 197–218 (FHMLGVAGVFGGSLFSAMHGSL) form a helical membrane-spanning segment. His198 lines the chlorophyll a pocket. Residues His215 and 264 to 265 (SF) each bind a quinone. His215 lines the Fe cation pocket. His272 lines the Fe cation pocket. Residues 274–288 (FLAAWPVVGIWFTAL) traverse the membrane as a helical segment. 4 residues coordinate [CaMn4O5] cluster: His332, Glu333, Asp342, and Ala344. Residues 345-353 (AVEAPAVNG) constitute a propeptide that is removed on maturation.

It belongs to the reaction center PufL/M/PsbA/D family. In terms of assembly, PSII is composed of 1 copy each of membrane proteins PsbA, PsbB, PsbC, PsbD, PsbE, PsbF, PsbH, PsbI, PsbJ, PsbK, PsbL, PsbM, PsbT, PsbX, PsbY, PsbZ, Psb30/Ycf12, at least 3 peripheral proteins of the oxygen-evolving complex and a large number of cofactors. It forms dimeric complexes. Requires The D1/D2 heterodimer binds P680, chlorophylls that are the primary electron donor of PSII, and subsequent electron acceptors. It shares a non-heme iron and each subunit binds pheophytin, quinone, additional chlorophylls, carotenoids and lipids. D1 provides most of the ligands for the Mn4-Ca-O5 cluster of the oxygen-evolving complex (OEC). There is also a Cl(-1) ion associated with D1 and D2, which is required for oxygen evolution. The PSII complex binds additional chlorophylls, carotenoids and specific lipids. as cofactor. Post-translationally, tyr-161 forms a radical intermediate that is referred to as redox-active TyrZ, YZ or Y-Z. In terms of processing, C-terminally processed by CTPA; processing is essential to allow assembly of the oxygen-evolving complex and thus photosynthetic growth.

Its subcellular location is the plastid. The protein resides in the chloroplast thylakoid membrane. The enzyme catalyses 2 a plastoquinone + 4 hnu + 2 H2O = 2 a plastoquinol + O2. Photosystem II (PSII) is a light-driven water:plastoquinone oxidoreductase that uses light energy to abstract electrons from H(2)O, generating O(2) and a proton gradient subsequently used for ATP formation. It consists of a core antenna complex that captures photons, and an electron transfer chain that converts photonic excitation into a charge separation. The D1/D2 (PsbA/PsbD) reaction center heterodimer binds P680, the primary electron donor of PSII as well as several subsequent electron acceptors. The sequence is that of Photosystem II protein D1 from Marchantia polymorpha (Common liverwort).